Reading from the N-terminus, the 141-residue chain is ATP synthase epsilon chain (141 aa).

Belongs to the ATPase epsilon chain family. As to quaternary structure, F-type ATPases have 2 components, CF(1) - the catalytic core - and CF(0) - the membrane proton channel. CF(1) has five subunits: alpha(3), beta(3), gamma(1), delta(1), epsilon(1). CF(0) has three main subunits: a, b and c.

Its subcellular location is the cell inner membrane. Functionally, produces ATP from ADP in the presence of a proton gradient across the membrane. The sequence is that of ATP synthase epsilon chain from Thioalkalivibrio sulfidiphilus (strain HL-EbGR7).